The primary structure comprises 129 residues: Glycine cleavage system H protein (129 aa).

In terms of domain architecture, Lipoyl-binding spans 24-106 (LLKIGVSEFA…IGEGWLVILK (83 aa)). N6-lipoyllysine is present on Lys-65.

This sequence belongs to the GcvH family. The glycine cleavage system is composed of four proteins: P, T, L and H. (R)-lipoate is required as a cofactor.

The glycine cleavage system catalyzes the degradation of glycine. The H protein shuttles the methylamine group of glycine from the P protein to the T protein. This chain is Glycine cleavage system H protein, found in Prochlorococcus marinus (strain MIT 9215).